Reading from the N-terminus, the 111-residue chain is Small ribosomal subunit protein bS16 (111 aa).

This sequence belongs to the bacterial ribosomal protein bS16 family.

The chain is Small ribosomal subunit protein bS16 from Rickettsia felis (strain ATCC VR-1525 / URRWXCal2) (Rickettsia azadi).